We begin with the raw amino-acid sequence, 215 residues long: MSIGILGKKLGMSQFFDDEGRAVPVTVIEAGPCRITQVKTPTNDGYSAVQVGFGDVREKLVNQPAKGHLKKSGEDLLRHLKEYRVDSTDGVELGSSVTVDAFEPGQKVDVSGDTMGRGFSGYQKRHGFSRGPMTHGSKNHREPGSTGAGTTPGRIYPGKRMAGRYGGTKTTVKGLVVLKVDSERNLLVVKGSVPGKPGALLSIRPAVRVGAKATA.

Residues Lys124–Arg164 are disordered.

The protein belongs to the universal ribosomal protein uL3 family. In terms of assembly, part of the 50S ribosomal subunit. Forms a cluster with proteins L14 and L19.

Its function is as follows. One of the primary rRNA binding proteins, it binds directly near the 3'-end of the 23S rRNA, where it nucleates assembly of the 50S subunit. The chain is Large ribosomal subunit protein uL3 from Synechococcus sp. (strain RCC307).